We begin with the raw amino-acid sequence, 268 residues long: MEMO1 family protein Ta0237 (268 aa).

The protein belongs to the MEMO1 family.

This chain is MEMO1 family protein Ta0237, found in Thermoplasma acidophilum (strain ATCC 25905 / DSM 1728 / JCM 9062 / NBRC 15155 / AMRC-C165).